Consider the following 418-residue polypeptide: Gamma-glutamyl phosphate reductase (418 aa).

The protein belongs to the gamma-glutamyl phosphate reductase family.

The protein localises to the cytoplasm. It catalyses the reaction L-glutamate 5-semialdehyde + phosphate + NADP(+) = L-glutamyl 5-phosphate + NADPH + H(+). It participates in amino-acid biosynthesis; L-proline biosynthesis; L-glutamate 5-semialdehyde from L-glutamate: step 2/2. Its function is as follows. Catalyzes the NADPH-dependent reduction of L-glutamate 5-phosphate into L-glutamate 5-semialdehyde and phosphate. The product spontaneously undergoes cyclization to form 1-pyrroline-5-carboxylate. The chain is Gamma-glutamyl phosphate reductase from Chlorobium limicola (strain DSM 245 / NBRC 103803 / 6330).